We begin with the raw amino-acid sequence, 2175 residues long: Homeobox protein cut (2175 aa).

2 disordered regions span residues 139–170 and 249–432; these read NLLANTNTPSPSPPLLSAEQQQQLQSSLQQSG and GNVK…GQPA. Low complexity-rich tracts occupy residues 153-169 and 249-268; these read LLSAEQQQQLQSSLQQS and GNVKSGSTTSNANHTNSNNS. Residues 265-343 are a coiled coil; the sequence is SNNSHQDEEE…ENKDAGEASL (79 aa). Positions 271–294 are enriched in acidic residues; sequence DEEELDDEEEDEEEDEDEDDEEEN. The span at 309–320 shows a compositional bias: polar residues; sequence QQETRTEPSATT. Positions 344–359 are enriched in low complexity; it reads NVSNNHNTTDSNNSCS. Residues 360–374 are compositionally biased toward polar residues; the sequence is RKNNNGGNESEQHVA. Over residues 384-415 the composition is skewed to low complexity; it reads NNNTNTSNNNNTSNTATSNTNNNNNNNSSSGN. Positions 433-499 form a coiled coil; sequence VLLAAKDKEI…NEALAEATAL (67 aa). Positions 503 to 515 are enriched in low complexity; the sequence is ASTNNNNNSQSSD. 2 disordered regions span residues 503–600 and 656–765; these read ASTN…KIKK and ASDA…NTNA. A compositionally biased stretch (acidic residues) spans 546–568; it reads AEDDEEDEDQAMLVDSEEAEDKP. Residues 673 to 696 show a composition bias toward basic residues; the sequence is QQQHQHQQQHHQQQHLHQQHHHHL. Residues 697-710 are compositionally biased toward low complexity; it reads QQQPNSGSNSNPAS. Residues 714-735 show a composition bias toward basic residues; sequence HHGHHLHGHGLLHPSSAHHLHH. The segment covering 738 to 765 has biased composition (low complexity); it reads TESNSNSSTPTAAGNNNGSNNSSSNTNA. Residues 877–964 constitute a DNA-binding region (CUT 1); it reads NMDKYANQAL…VMLLKSLIPK (88 aa). 2 disordered regions span residues 1001 to 1083 and 1197 to 1289; these read LMKQ…HDDQ and QRSS…EFAA. Composition is skewed to basic and acidic residues over residues 1009-1030 and 1062-1083; these read QHREQERRSHGGEDSHSNEDSK and QREREREQREREQQQRLRHDDQ. A coiled-coil region spans residues 1056 to 1161; the sequence is EQAAAQQRER…QQQAAQAQAQ (106 aa). A compositionally biased stretch (low complexity) spans 1249-1282; the sequence is GAPPTAAPPTGGASSNSAAPSPLSNSILPPALSS. Residues 1330–1417 constitute a DNA-binding region (CUT 2); that stretch reads QQQFDMFNNL…VHKLVASQYK (88 aa). The stretch at 1463-1522 forms a coiled coil; that stretch reads AQAQHLMQQMQAAAMSAAMQQQQVAQAQQQAQQAQQAQQHLQQQAQQHLQQQQHLAQQQH. Residues 1507-1540 are compositionally biased toward low complexity; that stretch reads AQQHLQQQQHLAQQQHPHQQHHQAAAAAAALHHQ. Disordered regions lie at residues 1507-1588, 1695-1747, 1803-1826, 1922-1955, 2069-2097, and 2113-2175; these read AQQH…PMLM, ERRE…PSKK, QVPHGPAGQDNPIPSRESTSATPF, RSDDYQDDLELEGGGHNLSDNESLEGQEPEDKTT, KQEEDDDEEQSGSVNLDNEDNATSEQKLK, and SSTG…GWNY. Over residues 1564–1573 the composition is skewed to gly residues; the sequence is AQPGGPGGNQ. The segment at residues 1608–1695 is a DNA-binding region (CUT 3); the sequence is YEMAALTQDL…VERLQLLKNE (88 aa). The segment covering 1709-1732 has biased composition (low complexity); the sequence is NQQDNSSDTSSNDTNDFYTSSPGP. The homeobox DNA-binding region spans 1745 to 1804; the sequence is SKKQRVLFSEEQKEALRLAFALDPYPNVGTIEFLANELGLATRTITNWFHNHRMRLKQQV. 2 positions are modified to phosphoserine: Ser1940 and Ser1944. A compositionally biased stretch (pro residues) spans 2126 to 2135; it reads PLAPPPPPPA. A compositionally biased stretch (low complexity) spans 2136–2175; the sequence is ASSSIVSGESTTSSSSSSNTSSSTPAVTTAAATAAAGWNY.

This sequence belongs to the CUT homeobox family. In terms of tissue distribution, detected in many cells in the central nervous system, all external sensory organs, some peripheral neurons, and in the non-neural cells of the spiracles and the Malpighian tubules.

The protein localises to the nucleus. Its function is as follows. Regulator of cell fate decisions in multiple lineages. Specifically, functions as a determination factor that specifies sensory organ identity in precursor cells. Probably also involved in cell type specification of Malpighian tubules. In absence of cut gene external sensory organs are transformed into chordotonal organs. This chain is Homeobox protein cut (ct), found in Drosophila melanogaster (Fruit fly).